A 350-amino-acid chain; its full sequence is tRNA pseudouridine synthase D (350 aa).

Residue D79 is the Nucleophile of the active site. The region spanning 154 to 306 (GAPNYYGPQR…EQERRPIVLY (153 aa)) is the TRUD domain.

The protein belongs to the pseudouridine synthase TruD family.

The enzyme catalyses uridine(13) in tRNA = pseudouridine(13) in tRNA. Its function is as follows. Responsible for synthesis of pseudouridine from uracil-13 in transfer RNAs. The chain is tRNA pseudouridine synthase D from Pseudoalteromonas atlantica (strain T6c / ATCC BAA-1087).